Reading from the N-terminus, the 298-residue chain is Proton-activated chloride channel (298 aa).

Residues 1-12 (MPIGFNKACLKN) are Cytoplasmic-facing. A helical transmembrane segment spans residues 13-33 (VFTVILVLIYLALTAVAVFLA). Topologically, residues 34 to 245 (YQTISDFMDK…RDPFIQQVKD (212 aa)) are extracellular. Residues 246-266 (IVTANPWNTIAILCGVFMALF) form a helical membrane-spanning segment. Residues 267–298 (KAADFAKLSIKWMIRIRKRHIRAKMREMNQIS) are Cytoplasmic-facing.

This sequence belongs to the proton-activated chloride channel family.

Its subcellular location is the cell membrane. It carries out the reaction chloride(in) = chloride(out). Chloride channel gated by pH that facilitates the entry of chloride ions into cells upon exposure to extracellular acidic pH. Displays channel activity with distinct kinetic properties compared to the human ortholog channel. The chain is Proton-activated chloride channel from Danio rerio (Zebrafish).